The sequence spans 435 residues: E3 ubiquitin-protein ligase RNFT1 (435 aa).

Positions 1–62 (MPLFLLSLPT…SSEDASTPQC (62 aa)) are disordered. The span at 16–34 (GHERRQRPEAKTSGSEKKY) shows a compositional bias: basic and acidic residues. Positions 40–62 (ANRSQLHSPPGTGSSEDASTPQC) are enriched in polar residues. 6 helical membrane-spanning segments follow: residues 158–178 (ILIL…LGIG), 203–223 (IQCA…YYTF), 233–253 (IFLN…IVGI), 256–276 (FILK…PSFI), 298–318 (TFVP…FGNV), and 323–343 (LGIL…FGHL). A required for ubiquitin ligase activity and for protection against ER stress-induced cell death region spans residues 368–419 (CSDVDDICSICQAEFQKPILLICQHIFCEECMTLWFNREKTCPLCRTVISDH). An RING-type zinc finger spans residues 375 to 413 (CSICQAEFQKPILLICQHIFCEECMTLWFNREKTCPLCR).

In terms of tissue distribution, expressed at highest levels in testis, lower levels in heart, liver, lung, and kidney. Not detected in brain, ovary, and uterus. Down-regulated in testis from patients with maturation arrest (MA) or Sertoli cell-only syndrome (SCOS). Ubiquitously expressed with high expression in testis.

The protein resides in the endoplasmic reticulum membrane. The enzyme catalyses S-ubiquitinyl-[E2 ubiquitin-conjugating enzyme]-L-cysteine + [acceptor protein]-L-lysine = [E2 ubiquitin-conjugating enzyme]-L-cysteine + N(6)-ubiquitinyl-[acceptor protein]-L-lysine.. The protein operates within protein modification; protein ubiquitination. Its function is as follows. E3 ubiquitin-protein ligase that acts in the endoplasmic reticulum (ER)-associated degradation (ERAD) pathway, which targets misfolded proteins that accumulate in the endoplasmic reticulum (ER) for ubiquitination and subsequent proteasome-mediated degradation. Protects cells from ER stress-induced apoptosis. The chain is E3 ubiquitin-protein ligase RNFT1 (RNFT1) from Homo sapiens (Human).